Consider the following 331-residue polypeptide: tRNA-cytidine(32) 2-sulfurtransferase (331 aa).

A disordered region spans residues 1–33 (MNAPHMNDTAADAATLDDAAAPAGRPALTRREQ). Low complexity predominate over residues 8–23 (DTAADAATLDDAAAPA). The PP-loop motif motif lies at 71–76 (SGGKDS). Residues C146, C149, and C237 each coordinate [4Fe-4S] cluster.

Belongs to the TtcA family. Homodimer. Mg(2+) is required as a cofactor. Requires [4Fe-4S] cluster as cofactor.

The protein resides in the cytoplasm. It catalyses the reaction cytidine(32) in tRNA + S-sulfanyl-L-cysteinyl-[cysteine desulfurase] + AH2 + ATP = 2-thiocytidine(32) in tRNA + L-cysteinyl-[cysteine desulfurase] + A + AMP + diphosphate + H(+). Its pathway is tRNA modification. Its function is as follows. Catalyzes the ATP-dependent 2-thiolation of cytidine in position 32 of tRNA, to form 2-thiocytidine (s(2)C32). The sulfur atoms are provided by the cysteine/cysteine desulfurase (IscS) system. This Burkholderia orbicola (strain MC0-3) protein is tRNA-cytidine(32) 2-sulfurtransferase.